The sequence spans 506 residues: Cysteine--tRNA ligase (506 aa).

Cysteine 34 lines the Zn(2+) pocket. The 'HIGH' region motif lies at 36–46 (PTVYDFAHIGN). The Zn(2+) site is built by cysteine 230, histidine 269, and glutamate 273. The 'KMSKS' region motif lies at 302-306 (KMSKS). Lysine 305 lines the ATP pocket.

The protein belongs to the class-I aminoacyl-tRNA synthetase family. In terms of assembly, monomer. It depends on Zn(2+) as a cofactor.

The protein localises to the cytoplasm. It carries out the reaction tRNA(Cys) + L-cysteine + ATP = L-cysteinyl-tRNA(Cys) + AMP + diphosphate. The protein is Cysteine--tRNA ligase of Brucella suis biovar 1 (strain 1330).